The following is a 91-amino-acid chain: Small ribosomal subunit protein bS20 (91 aa).

The tract at residues 1–23 is disordered; that stretch reads MANTPSAKKRAKQAEKRRSHNAS. Residues 7-20 show a composition bias toward basic residues; the sequence is AKKRAKQAEKRRSH.

It belongs to the bacterial ribosomal protein bS20 family.

Its function is as follows. Binds directly to 16S ribosomal RNA. The protein is Small ribosomal subunit protein bS20 of Pseudomonas paraeruginosa (strain DSM 24068 / PA7) (Pseudomonas aeruginosa (strain PA7)).